A 447-amino-acid chain; its full sequence is Neuraminidase (447 aa).

The Intravirion segment spans residues 1–6; the sequence is MNPNQK. The helical transmembrane segment at 7 to 27 threads the bilayer; the sequence is IITIGSICMGIGIISLILQIG. The interval 11-33 is involved in apical transport and lipid raft association; sequence GSICMGIGIISLILQIGNIISMW. The Virion surface portion of the chain corresponds to 28-447; it reads NIISMWVSHS…GAELPFTIDK (420 aa). The segment at 36–68 is hypervariable stalk region; the sequence is HSIQTENQNHHEACNPSIAGQDAASVALAGNSS. Asparagine 66 is a glycosylation site (N-linked (GlcNAc...) asparagine; by host). Residues 69–447 are head of neuraminidase; that stretch reads LCPISGWAIY…GAELPFTIDK (379 aa). 8 disulfide bridges follow: cysteine 70–cysteine 395, cysteine 102–cysteine 107, cysteine 162–cysteine 209, cysteine 211–cysteine 216, cysteine 257–cysteine 270, cysteine 259–cysteine 268, cysteine 296–cysteine 313, and cysteine 399–cysteine 424. Arginine 96 contributes to the substrate binding site. Asparagine 124 carries an N-linked (GlcNAc...) asparagine; by host glycan. The Proton donor/acceptor role is filled by aspartate 129. Arginine 130 lines the substrate pocket. Asparagine 213 carries an N-linked (GlcNAc...) asparagine; by host glycan. 255–256 provides a ligand contact to substrate; it reads EE. Residue arginine 271 coordinates substrate. Residues aspartate 272, glycine 276, and aspartate 302 each coordinate Ca(2+). Residue arginine 346 participates in substrate binding. Tyrosine 380 (nucleophile) is an active-site residue.

This sequence belongs to the glycosyl hydrolase 34 family. As to quaternary structure, homotetramer. Requires Ca(2+) as cofactor. Post-translationally, N-glycosylated.

It localises to the virion membrane. It is found in the host apical cell membrane. The enzyme catalyses Hydrolysis of alpha-(2-&gt;3)-, alpha-(2-&gt;6)-, alpha-(2-&gt;8)- glycosidic linkages of terminal sialic acid residues in oligosaccharides, glycoproteins, glycolipids, colominic acid and synthetic substrates.. Inhibited by the neuraminidase inhibitors zanamivir (Relenza) and oseltamivir (Tamiflu). These drugs interfere with the release of progeny virus from infected cells and are effective against all influenza strains. Resistance to neuraminidase inhibitors is quite rare. In terms of biological role, catalyzes the removal of terminal sialic acid residues from viral and cellular glycoconjugates. Cleaves off the terminal sialic acids on the glycosylated HA during virus budding to facilitate virus release. Additionally helps virus spread through the circulation by further removing sialic acids from the cell surface. These cleavages prevent self-aggregation and ensure the efficient spread of the progeny virus from cell to cell. Otherwise, infection would be limited to one round of replication. Described as a receptor-destroying enzyme because it cleaves a terminal sialic acid from the cellular receptors. May facilitate viral invasion of the upper airways by cleaving the sialic acid moieties on the mucin of the airway epithelial cells. Likely to plays a role in the budding process through its association with lipid rafts during intracellular transport. May additionally display a raft-association independent effect on budding. Plays a role in the determination of host range restriction on replication and virulence. Sialidase activity in late endosome/lysosome traffic seems to enhance virus replication. The polypeptide is Neuraminidase (Aves).